Consider the following 295-residue polypeptide: Small ribosomal subunit biogenesis GTPase RsgA (295 aa).

Residues 68–228 (KNLLTKPHVA…VVDTPGFANL (161 aa)) enclose the CP-type G domain. GTP-binding positions include 117 to 120 (NKMD) and 170 to 178 (GLSGVGKSS). 4 residues coordinate Zn(2+): Cys250, Cys255, His257, and Cys263.

It belongs to the TRAFAC class YlqF/YawG GTPase family. RsgA subfamily. In terms of assembly, monomer. Associates with 30S ribosomal subunit, binds 16S rRNA. It depends on Zn(2+) as a cofactor.

It is found in the cytoplasm. One of several proteins that assist in the late maturation steps of the functional core of the 30S ribosomal subunit. Helps release RbfA from mature subunits. May play a role in the assembly of ribosomal proteins into the subunit. Circularly permuted GTPase that catalyzes slow GTP hydrolysis, GTPase activity is stimulated by the 30S ribosomal subunit. This chain is Small ribosomal subunit biogenesis GTPase RsgA, found in Thermotoga petrophila (strain ATCC BAA-488 / DSM 13995 / JCM 10881 / RKU-1).